Consider the following 368-residue polypeptide: Probable acetylxylan esterase A (368 aa).

A signal peptide spans 1-19 (MRALSVFFALFCFLALSSA). Positions 20 to 28 (SPGQDVVKR) are excised as a propeptide. Positions 32–304 (GSLQQVTNFG…GEQDMEWFGF (273 aa)) are catalytic. The active-site Charge relay system is the Ser149. An N-linked (GlcNAc...) asparagine glycan is attached at Asn191. Positions 305–333 (AGGSSTTTTQPTTTSTTTSSGGSSTGTGV) are ser/Thr-rich linker. Positions 306 to 330 (GGSSTTTTQPTTTSTTTSSGGSSTG) are disordered. The segment covering 307 to 330 (GSSTTTTQPTTTSTTTSSGGSSTG) has biased composition (low complexity). The region spanning 332–368 (GVAAHWGQCGGNGWTGPTVCASGYTCTVVNAWYSQCL) is the CBM1 domain.

This sequence belongs to the carbohydrate esterase 1 (CE1) family. AxeA subfamily. Monomer.

The protein resides in the secreted. It catalyses the reaction Deacetylation of xylans and xylo-oligosaccharides.. The protein operates within glycan degradation; xylan degradation. Its function is as follows. Acetylxylan esterase involved in the hydrolysis of xylan, a major structural heterogeneous polysaccharide found in plant biomass representing the second most abundant polysaccharide in the biosphere, after cellulose. Degrades acetylated xylans by cleaving acetyl side groups from the hetero-xylan backbone. This Neosartorya fischeri (strain ATCC 1020 / DSM 3700 / CBS 544.65 / FGSC A1164 / JCM 1740 / NRRL 181 / WB 181) (Aspergillus fischerianus) protein is Probable acetylxylan esterase A (axeA).